Here is an 86-residue protein sequence, read N- to C-terminus: Putative membrane protein insertion efficiency factor (86 aa).

It belongs to the UPF0161 family.

Its subcellular location is the cell inner membrane. Could be involved in insertion of integral membrane proteins into the membrane. In Cellvibrio japonicus (strain Ueda107) (Pseudomonas fluorescens subsp. cellulosa), this protein is Putative membrane protein insertion efficiency factor.